The chain runs to 267 residues: tRNA pseudouridine synthase A (267 aa).

Asp-53 functions as the Nucleophile in the catalytic mechanism. Residue Tyr-114 participates in substrate binding.

The protein belongs to the tRNA pseudouridine synthase TruA family. In terms of assembly, homodimer.

The enzyme catalyses uridine(38/39/40) in tRNA = pseudouridine(38/39/40) in tRNA. Formation of pseudouridine at positions 38, 39 and 40 in the anticodon stem and loop of transfer RNAs. The chain is tRNA pseudouridine synthase A from Chlamydia trachomatis serovar L2b (strain UCH-1/proctitis).